The following is a 262-amino-acid chain: Probable esterase azaC (262 aa).

Active-site charge relay system residues include S119, D188, and H216.

Belongs to the LovG family.

The protein operates within secondary metabolite biosynthesis. Probable esterase; part of the gene cluster that mediates the biosynthesis of azaphilones, a class of fungal metabolites characterized by a highly oxygenated pyrano-quinone bicyclic core and exhibiting a broad range of bioactivities. In the first step, the non-reducing polyketide synthase azaA forms the hexaketide precursor from successive condensations of five malonyl-CoA units, presumably with a simple acetyl-CoA starter unit. The reactive polyketide chain then undergoes a PT-mediated C2-C7 cyclization to afford the aromatic ring and is eventually released as an aldehyde through the R-domain. The putative ketoreductase azaE is proposed to catalyze the reduction of the terminal ketone resulting in the early culture product FK17-P2a. The monooxygenase azaH was demonstrated to be the only enzyme required to convert FK17-P2a to azanigerone E. AzaH first hydroxylates the benzaldehyde intermediate FK17-P2a at C4, which triggers the formation of the pyran-ring to afford azanigerone E. In parallel, the 2,4-dimethylhexanoyl chain is synthesized by the HR-PKS azaB and is proposed to be transferred to the C4-hydroxyl of azanigerone E by the acyltransferase azaD directly from the ACP domain of azaB. Alternatively, the 2,4-dimethyl-hexanoyl chain may be offloaded from the HR-PKS as a carboxylic acid and converted to an acyl-CoA by azaF. The resulting acyl-CoA molecule could then be taken up as a substrate by AzaD to form azanigerone B. To yield the carboxylic acid substituent in azanigerone A, the hydroxypropyl side chain of azanigerone B would need to undergo a C-C oxidative cleavage catalyzed by cytochrome P450 AzaI. AzaI is proposed to act on a vicinal diol that leads to a C-C bond scission either through an alkoxyradical intermediate or a peroxy complex. In the biosynthesis of azanigerone A, azanigerone B first undergoes hydroxylation at C10, possibly catalyzed by one of the two FAD-dependent monooxygenases encoded in the cluster, azaG or azaL, resulting in the vicinal diol azanigerone C. Oxidative cleavage of azanigerone C by azaI would yield the corresponding aldehyde derivative of azanigerone A. Finally, the dehydrogenase azaJ is proposed to convert the aldehyde functional group into the carboxylic acid, completing the conversion from azanigerone B to azanigerone A. Alternatively, the oxidation of aldehyde to carboxylic acid may be catalyzed by the same P450 enzyme azaI via consecutive oxidation or by endogenous alcohol dehydrogenase. In Aspergillus niger (strain ATCC 1015 / CBS 113.46 / FGSC A1144 / LSHB Ac4 / NCTC 3858a / NRRL 328 / USDA 3528.7), this protein is Probable esterase azaC.